The following is a 226-amino-acid chain: High affinity heme transporter (226 aa).

The N-terminal stretch at 1–20 is a signal peptide; it reads MISLKIYFVLIFLFLKGINS. Residues 72 to 101 form a heme binding region; sequence CDTTILSETNNVTGSCYVANCANDTVLEIC. The GPI-anchor amidated serine moiety is linked to residue Ser-199. Positions 200–226 are cleaved as a propeptide — removed in mature form; that stretch reads SASSTIFKPSYFISCLLSVGLYLVLNF.

It localises to the cell membrane. It is found in the vacuole membrane. High affinity heme transporter involved in the assimilation of exogenous heme during conditions of low cellular iron. The sequence is that of High affinity heme transporter from Schizosaccharomyces pombe (strain 972 / ATCC 24843) (Fission yeast).